The sequence spans 912 residues: Probable transmembrane GTPase FZO-like, chloroplastic (912 aa).

A chloroplast-targeting transit peptide spans Met1–Ser54. Residues Ser51–Tyr71 are disordered. Topologically, residues Ala55–Glu773 are stromal. GTP-binding positions include Asn359–Thr364 and Ser521. The helical transmembrane segment at Val774–Ser794 threads the bilayer. The Chloroplast intermembrane segment spans residues Val795–Glu801. Residues Asp802–Tyr822 form a helical membrane-spanning segment. Residues Arg823–Leu912 are Stromal-facing. A coiled-coil region spans residues Asp877 to His904.

The protein belongs to the TRAFAC class dynamin-like GTPase superfamily. Dynamin/Fzo/YdjA family. Mitofusin subfamily.

Its subcellular location is the plastid. It localises to the chloroplast inner membrane. It is found in the chloroplast thylakoid membrane. Probable membrane-remodeling GTPase that plays a unique role in the in the determination of thylakoid and chloroplast morphology and regulates organization of the thylakoid network. Not involved in the determination of mitochondrial morphology or ultrastructure. The chain is Probable transmembrane GTPase FZO-like, chloroplastic from Arabidopsis thaliana (Mouse-ear cress).